A 155-amino-acid chain; its full sequence is Ribosomal RNA large subunit methyltransferase H (155 aa).

S-adenosyl-L-methionine-binding positions include Leu-73, Gly-104, and 123–128; that span reads LSPLTL.

The protein belongs to the RNA methyltransferase RlmH family. In terms of assembly, homodimer.

The protein localises to the cytoplasm. The catalysed reaction is pseudouridine(1915) in 23S rRNA + S-adenosyl-L-methionine = N(3)-methylpseudouridine(1915) in 23S rRNA + S-adenosyl-L-homocysteine + H(+). Its function is as follows. Specifically methylates the pseudouridine at position 1915 (m3Psi1915) in 23S rRNA. This Pseudomonas syringae pv. tomato (strain ATCC BAA-871 / DC3000) protein is Ribosomal RNA large subunit methyltransferase H.